Consider the following 33-residue polypeptide: Antimicrobial peptide MBP-1 (33 aa).

In terms of tissue distribution, predominantly in the embryo portion of the kernel.

It is found in the secreted. Its function is as follows. Inhibitor of both bacterial and fungal growth in vitro. In Zea mays (Maize), this protein is Antimicrobial peptide MBP-1.